We begin with the raw amino-acid sequence, 344 residues long: Deoxyhypusine hydroxylase (344 aa).

HEAT-like PBS-type repeat units follow at residues 81–107 and 115–140; these read LKHE…VLED and RHEA…FRDR. Fe cation is bound by residues H83, E84, H116, and E117. Residues 169 to 188 are disordered; that stretch reads EKLRASDFSSVDPAPPTAQG. HEAT-like PBS-type repeat units follow at residues 210 to 240, 248 to 274, and 281 to 308; these read KRYR…LAKG, FRHE…ALSN, and VRHE…FLHD. The Fe cation site is built by H250, E251, H283, and E284.

Belongs to the deoxyhypusine hydroxylase family. Requires Fe(2+) as cofactor.

It is found in the cytoplasm. The protein localises to the nucleus. It carries out the reaction [eIF5A protein]-deoxyhypusine + AH2 + O2 = [eIF5A protein]-hypusine + A + H2O. It participates in protein modification; eIF5A hypusination. Catalyzes the hydroxylation of the N(6)-(4-aminobutyl)-L-lysine intermediate to form hypusine, an essential post-translational modification only found in mature eIF-5A factor. This Chaetomium globosum (strain ATCC 6205 / CBS 148.51 / DSM 1962 / NBRC 6347 / NRRL 1970) (Soil fungus) protein is Deoxyhypusine hydroxylase.